The following is a 320-amino-acid chain: MGRIPCCEKENVKRGQWTPEEDNKLASYIAQHGTRNWRLIPKNAGLQRCGKSCRLRWTNYLRPDLKHGQFSEAEEHIIVKFHSVLGNRWSLIAAQLPGRTDNDVKNYWNTKLKKKLSGMGIDPVTHKPFSHLMAEITTTLNPPQVSHLAEAALGCFKDEMLHLLTKKRVDLNQINFSNHNPNPNNFHEIADNEAGKIKMDGLDHGNGIMKLWDMGNGFSYGSSSSSFGNEERNDGSASPAVAAWRGHGGIRTAVAETAAAEEEERRKLKGEVVDQEEIGSEGGRGDGMTMMRNHHHHQHVFNVDNVLWDLQADDLINHMV.

HTH myb-type domains lie at 9-65 and 66-116; these read KENV…RPDL and KHGQ…KKKL. 2 consecutive DNA-binding regions (H-T-H motif) follow at residues 37-61 and 89-112; these read WRLI…TNYL and WSLI…NTKL. Positions 257 to 283 are disordered; sequence TAAAEEEERRKLKGEVVDQEEIGSEGG. The segment covering 263-272 has biased composition (basic and acidic residues); sequence EERRKLKGEV.

As to expression, expressed in the tapetum and middle layer of developing anthers. Expressed in trichomes.

It localises to the nucleus. Transcription factor that binds to the DNA sequence 5'-CCAACC-3'. Regulates directly PME5, UND and GLOX1. Essential for tapetum development in anthers and microsporogenesis. Regulates the timing of tapetal programmed cell death (PCD) which is critical for pollen development. May act through the activation of UND, encoding an A1 aspartic protease. Required for anther development by regulating tapetum development, callose dissolution and exine formation. Acts upstream of A6 and FAR2/MS2, two genes required for pollen exine formation. Negatively regulates trichome endoreduplication and trichome branching. The chain is Transcription factor MYB80 from Arabidopsis thaliana (Mouse-ear cress).